Reading from the N-terminus, the 98-residue chain is Large ribosomal subunit protein uL23 (98 aa).

The protein belongs to the universal ribosomal protein uL23 family. As to quaternary structure, part of the 50S ribosomal subunit. Contacts protein L29, and trigger factor when it is bound to the ribosome.

One of the early assembly proteins it binds 23S rRNA. One of the proteins that surrounds the polypeptide exit tunnel on the outside of the ribosome. Forms the main docking site for trigger factor binding to the ribosome. The polypeptide is Large ribosomal subunit protein uL23 (Rickettsia typhi (strain ATCC VR-144 / Wilmington)).